We begin with the raw amino-acid sequence, 397 residues long: MATTTAGLTDLKFRVVREDFADAVAWVARSLPTRPTIPVLAGVLLTGTDEGLTISGFDYEVSAEVKVSAEIASAGSVLVSGRLLSDITKALPAKPVEVSVEGTRVSLTCGSARFSLPTLAVEDYPALPALPEETGVIASDLFAEAIGQVAVAAGRDDTLPMLTGIRVEISGESVVLAATDRFRLAVRELTWVTTAGDVEAAVLVPAKTLAEAAKAGTDGNQVHLALGSGASVGKDGLLGIRSEGKRSTTRLLDAEFPKFRQLLPAEHTAVATIGVAELTEAIKRVALVADRGAQIRMEFSDDTLKLSAGADDVGRAEEDLPVDFAGEPLTIAFNPTYLTDGLGSLHSERVTFGFTTPSRPAVLRPAGEDDGANGGSGPFPAAKTDYVYLLMPVRLPG.

It belongs to the beta sliding clamp family. Forms a ring-shaped head-to-tail homodimer around DNA which binds and tethers DNA polymerases and other proteins to the DNA. The DNA replisome complex has a single clamp-loading complex (3 tau and 1 each of delta, delta', psi and chi subunits) which binds 3 Pol III cores (1 core on the leading strand and 2 on the lagging strand) each with a beta sliding clamp dimer. Additional proteins in the replisome are other copies of gamma, psi and chi, Ssb, DNA helicase and RNA primase.

The protein localises to the cytoplasm. Functionally, confers DNA tethering and processivity to DNA polymerases and other proteins. Acts as a clamp, forming a ring around DNA (a reaction catalyzed by the clamp-loading complex) which diffuses in an ATP-independent manner freely and bidirectionally along dsDNA. Initially characterized for its ability to contact the catalytic subunit of DNA polymerase III (Pol III), a complex, multichain enzyme responsible for most of the replicative synthesis in bacteria; Pol III exhibits 3'-5' exonuclease proofreading activity. The beta chain is required for initiation of replication as well as for processivity of DNA replication. This chain is Beta sliding clamp (dnaN), found in Mycolicibacterium smegmatis (strain ATCC 700084 / mc(2)155) (Mycobacterium smegmatis).